Here is a 216-residue protein sequence, read N- to C-terminus: UPF0502 protein Spea_2482 (216 aa).

It belongs to the UPF0502 family.

The sequence is that of UPF0502 protein Spea_2482 from Shewanella pealeana (strain ATCC 700345 / ANG-SQ1).